Here is a 106-residue protein sequence, read N- to C-terminus: Gibberellin-regulated protein 4 (106 aa).

The signal sequence occupies residues 1-25 (MAKSYGAIFLLTLIVLFMLQTMVMA).

This sequence belongs to the GASA family. Post-translationally, six disulfide bonds may be present. In terms of tissue distribution, expressed in flower buds, style, stamen filaments, vasculature of petals, root phloem, vasculature of cotyledons and rosette leaves and developing embryo.

Its subcellular location is the secreted. Functionally, gibberellin-regulated protein involved in the regulation of floral meristem and floral organ identity, and promotion of seed size and weight. May play a role in the promotion of gibberellin responses such as regulation of flowering under short-day conditions, seed germination and inhibition of gibberellin oxidase. Possesses redox activity in E.coli and may function in redox regulation in planta. The sequence is that of Gibberellin-regulated protein 4 (GASA4) from Arabidopsis thaliana (Mouse-ear cress).